The following is a 922-amino-acid chain: Isoleucine--tRNA ligase (922 aa).

Positions 58 to 68 (PYANGDIHIGH) match the 'HIGH' region motif. Glu-552 serves as a coordination point for L-isoleucyl-5'-AMP. A 'KMSKS' region motif is present at residues 593–597 (KMSKS). Position 596 (Lys-596) interacts with ATP. Positions 885, 888, 905, and 908 each coordinate Zn(2+).

The protein belongs to the class-I aminoacyl-tRNA synthetase family. IleS type 1 subfamily. As to quaternary structure, monomer. It depends on Zn(2+) as a cofactor.

It localises to the cytoplasm. It carries out the reaction tRNA(Ile) + L-isoleucine + ATP = L-isoleucyl-tRNA(Ile) + AMP + diphosphate. Catalyzes the attachment of isoleucine to tRNA(Ile). As IleRS can inadvertently accommodate and process structurally similar amino acids such as valine, to avoid such errors it has two additional distinct tRNA(Ile)-dependent editing activities. One activity is designated as 'pretransfer' editing and involves the hydrolysis of activated Val-AMP. The other activity is designated 'posttransfer' editing and involves deacylation of mischarged Val-tRNA(Ile). The sequence is that of Isoleucine--tRNA ligase from Ruthia magnifica subsp. Calyptogena magnifica.